We begin with the raw amino-acid sequence, 182 residues long: UPF0397 protein BCQ_2505 (182 aa).

5 helical membrane passes run 9–29 (VVAI…GFSI), 40–60 (AILT…IGLI), 71–91 (WGIW…MGFI), 114–134 (ITGL…DIIV), and 142–162 (IVIQ…VLGL).

This sequence belongs to the UPF0397 family.

The protein resides in the cell membrane. This chain is UPF0397 protein BCQ_2505, found in Bacillus cereus (strain Q1).